Reading from the N-terminus, the 615-residue chain is Threonine--tRNA ligase (615 aa).

The interval 1-132 (MRILQLHCDR…PLAEGFKVIT (132 aa)) is editing domain. Residues 196 to 495 (PHVALMKRMG…SARGTKPELP (300 aa)) are catalytic. Cysteine 288, histidine 340, and histidine 464 together coordinate Zn(2+).

It belongs to the class-II aminoacyl-tRNA synthetase family. In terms of assembly, homodimer. Requires Zn(2+) as cofactor.

Its subcellular location is the cytoplasm. The catalysed reaction is tRNA(Thr) + L-threonine + ATP = L-threonyl-tRNA(Thr) + AMP + diphosphate + H(+). Catalyzes the attachment of threonine to tRNA(Thr) in a two-step reaction: L-threonine is first activated by ATP to form Thr-AMP and then transferred to the acceptor end of tRNA(Thr). Also edits incorrectly charged L-seryl-tRNA(Thr). The chain is Threonine--tRNA ligase (thrS) from Cenarchaeum symbiosum (strain A).